Reading from the N-terminus, the 395-residue chain is Elongation factor Tu (395 aa).

The tr-type G domain occupies 10–204 (KPHVNIGTIG…NVDEYIPLPQ (195 aa)). The interval 19 to 26 (GHVDHGKT) is G1. 19 to 26 (GHVDHGKT) provides a ligand contact to GTP. T26 serves as a coordination point for Mg(2+). Residues 60–64 (GITIN) are G2. The interval 81-84 (DCPG) is G3. GTP-binding positions include 81–85 (DCPGH) and 136–139 (NKVD). The tract at residues 136-139 (NKVD) is G4. Residues 174–176 (SAL) are G5.

This sequence belongs to the TRAFAC class translation factor GTPase superfamily. Classic translation factor GTPase family. EF-Tu/EF-1A subfamily. Monomer.

The protein localises to the cytoplasm. It carries out the reaction GTP + H2O = GDP + phosphate + H(+). Functionally, GTP hydrolase that promotes the GTP-dependent binding of aminoacyl-tRNA to the A-site of ribosomes during protein biosynthesis. This Amoebophilus asiaticus (strain 5a2) protein is Elongation factor Tu.